Reading from the N-terminus, the 443-residue chain is Trigger factor (443 aa).

The region spanning 165–250 is the PPIase FKBP-type domain; that stretch reads GDQVVMDFVG…IKEVKEPVAA (86 aa).

The protein belongs to the FKBP-type PPIase family. Tig subfamily.

Its subcellular location is the cytoplasm. The enzyme catalyses [protein]-peptidylproline (omega=180) = [protein]-peptidylproline (omega=0). Involved in protein export. Acts as a chaperone by maintaining the newly synthesized protein in an open conformation. Functions as a peptidyl-prolyl cis-trans isomerase. The chain is Trigger factor from Ruegeria pomeroyi (strain ATCC 700808 / DSM 15171 / DSS-3) (Silicibacter pomeroyi).